We begin with the raw amino-acid sequence, 553 residues long: Dihydroxy-acid dehydratase (553 aa).

D78 provides a ligand contact to Mg(2+). C119 lines the [2Fe-2S] cluster pocket. The Mg(2+) site is built by D120 and K121. Residue K121 is modified to N6-carboxylysine. [2Fe-2S] cluster is bound at residue C193. Mg(2+) is bound at residue E441. S467 acts as the Proton acceptor in catalysis.

Belongs to the IlvD/Edd family. As to quaternary structure, homodimer. [2Fe-2S] cluster is required as a cofactor. It depends on Mg(2+) as a cofactor.

It carries out the reaction (2R)-2,3-dihydroxy-3-methylbutanoate = 3-methyl-2-oxobutanoate + H2O. The catalysed reaction is (2R,3R)-2,3-dihydroxy-3-methylpentanoate = (S)-3-methyl-2-oxopentanoate + H2O. It functions in the pathway amino-acid biosynthesis; L-isoleucine biosynthesis; L-isoleucine from 2-oxobutanoate: step 3/4. The protein operates within amino-acid biosynthesis; L-valine biosynthesis; L-valine from pyruvate: step 3/4. Functions in the biosynthesis of branched-chain amino acids. Catalyzes the dehydration of (2R,3R)-2,3-dihydroxy-3-methylpentanoate (2,3-dihydroxy-3-methylvalerate) into 2-oxo-3-methylpentanoate (2-oxo-3-methylvalerate) and of (2R)-2,3-dihydroxy-3-methylbutanoate (2,3-dihydroxyisovalerate) into 2-oxo-3-methylbutanoate (2-oxoisovalerate), the penultimate precursor to L-isoleucine and L-valine, respectively. This Geotalea daltonii (strain DSM 22248 / JCM 15807 / FRC-32) (Geobacter daltonii) protein is Dihydroxy-acid dehydratase.